The sequence spans 342 residues: Platelet-activating factor receptor (342 aa).

The Extracellular segment spans residues 1-16 (MEPNNSFRVDSEFRYT). N-linked (GlcNAc...) asparagine glycosylation occurs at asparagine 4. The helical transmembrane segment at 17 to 38 (LFPIFYSIVFVLGVIANSYVLW) threads the bilayer. The Cytoplasmic portion of the chain corresponds to 39 to 54 (VFARLYPSKKFNEIKI). The chain crosses the membrane as a helical span at residues 55–74 (FMVNLTMADLLFLVTLPLWI). Residues 75–91 (VYYYNQGDWILPKFLCN) lie on the Extracellular side of the membrane. The cysteines at positions 90 and 173 are disulfide-linked. A helical membrane pass occupies residues 92–113 (LAGCFFFINTYCSVAFLAVITY). At 114-133 (NRFQAVTRPIKTAQATTRKR) the chain is on the cytoplasmic side. A helical membrane pass occupies residues 134 to 155 (GILLSLIIWVSIVGAASYFFVL). Residues 156–184 (DSTNREPNKTGSANITRCFEHYEKGSIPV) are Extracellular-facing. N-linked (GlcNAc...) asparagine glycosylation is found at asparagine 163 and asparagine 169. A helical membrane pass occupies residues 185-205 (LTIHIFLVFSFFLVFLIILFC). Over 206-233 (NLVIIRTLLTQQVQIQRNAEVKRRALWM) the chain is Cytoplasmic. A helical membrane pass occupies residues 234-254 (VCTVLAVFIICFVPHHLVQLP). Residues 255–276 (WTLAELGFQDTDFHQAINDAHQ) are Extracellular-facing. The helical transmembrane segment at 277 to 296 (VTLCLLSTNCVLDPIIYCFL) threads the bilayer. Residues 297–342 (TKKFRKHLTEKLYSMRESRKCSRATSETGTEVVMQLKDVPVKSLKY) are Cytoplasmic-facing.

It belongs to the G-protein coupled receptor 1 family. As to quaternary structure, interacts with ARRB1. In terms of tissue distribution, found in oviductal epithelial and stroma cells. Levels in the oviduct are raised at days 2-4 of both pregnancy and of the estrus cycle. In the endometrium, localization is predominantly to the apical borders of glandular and luminal epithelial cells. Expressed at lower levels in endometrial stromal cells. Levels in the endometrium are increased at day 20 of pregnancy (at protein level).

The protein localises to the cell membrane. Receptor for platelet activating factor, a chemotactic phospholipid mediator that possesses potent inflammatory, smooth-muscle contractile and hypotensive activity. Seems to mediate its action via a G protein that activates a phosphatidylinositol-calcium second messenger system. May be involved in the morphological and physical modifications of the oviduct and uterus during the estrus cycle and early pregnancy. This Bos taurus (Bovine) protein is Platelet-activating factor receptor.